The sequence spans 85 residues: Putative membrane protein insertion efficiency factor (85 aa).

This sequence belongs to the UPF0161 family.

Its subcellular location is the cell inner membrane. Functionally, could be involved in insertion of integral membrane proteins into the membrane. The sequence is that of Putative membrane protein insertion efficiency factor from Phenylobacterium zucineum (strain HLK1).